The sequence spans 289 residues: UPF0276 protein BPP1075 (289 aa).

The protein belongs to the UPF0276 family.

In Bordetella parapertussis (strain 12822 / ATCC BAA-587 / NCTC 13253), this protein is UPF0276 protein BPP1075.